The chain runs to 432 residues: Glutamyl-tRNA reductase (432 aa).

Substrate is bound by residues 55-58 (TCNR), Ser114, 119-121 (ETQ), and Gln125. Cys56 functions as the Nucleophile in the catalytic mechanism. Residue 194–199 (GAGEMI) coordinates NADP(+).

The protein belongs to the glutamyl-tRNA reductase family. As to quaternary structure, homodimer.

It carries out the reaction (S)-4-amino-5-oxopentanoate + tRNA(Glu) + NADP(+) = L-glutamyl-tRNA(Glu) + NADPH + H(+). It participates in porphyrin-containing compound metabolism; protoporphyrin-IX biosynthesis; 5-aminolevulinate from L-glutamyl-tRNA(Glu): step 1/2. In terms of biological role, catalyzes the NADPH-dependent reduction of glutamyl-tRNA(Glu) to glutamate 1-semialdehyde (GSA). This chain is Glutamyl-tRNA reductase, found in Burkholderia thailandensis (strain ATCC 700388 / DSM 13276 / CCUG 48851 / CIP 106301 / E264).